Here is a 325-residue protein sequence, read N- to C-terminus: Holliday junction branch migration complex subunit RuvB (325 aa).

A large ATPase domain (RuvB-L) region spans residues 1–180; the sequence is MKNQLLDAKV…FGIHLKLNFY (180 aa). Residues Leu-19, Arg-20, Gly-61, Lys-64, Thr-65, Thr-66, 127 to 129, Arg-170, Tyr-180, and Arg-217 contribute to the ATP site; that span reads EDF. Mg(2+) is bound at residue Thr-65. The interval 181–251 is small ATPAse domain (RuvB-S); that stretch reads SCEELTKIVE…ITDYALNQLG (71 aa). Positions 254–325 are head domain (RuvB-H); that stretch reads KLGLDSSDHK…ITANALKHLH (72 aa). The DNA site is built by Arg-290, Arg-309, and Arg-314.

The protein belongs to the RuvB family. In terms of assembly, homohexamer. Forms an RuvA(8)-RuvB(12)-Holliday junction (HJ) complex. HJ DNA is sandwiched between 2 RuvA tetramers; dsDNA enters through RuvA and exits via RuvB. An RuvB hexamer assembles on each DNA strand where it exits the tetramer. Each RuvB hexamer is contacted by two RuvA subunits (via domain III) on 2 adjacent RuvB subunits; this complex drives branch migration. In the full resolvosome a probable DNA-RuvA(4)-RuvB(12)-RuvC(2) complex forms which resolves the HJ.

The protein resides in the cytoplasm. It catalyses the reaction ATP + H2O = ADP + phosphate + H(+). Functionally, the RuvA-RuvB-RuvC complex processes Holliday junction (HJ) DNA during genetic recombination and DNA repair, while the RuvA-RuvB complex plays an important role in the rescue of blocked DNA replication forks via replication fork reversal (RFR). RuvA specifically binds to HJ cruciform DNA, conferring on it an open structure. The RuvB hexamer acts as an ATP-dependent pump, pulling dsDNA into and through the RuvAB complex. RuvB forms 2 homohexamers on either side of HJ DNA bound by 1 or 2 RuvA tetramers; 4 subunits per hexamer contact DNA at a time. Coordinated motions by a converter formed by DNA-disengaged RuvB subunits stimulates ATP hydrolysis and nucleotide exchange. Immobilization of the converter enables RuvB to convert the ATP-contained energy into a lever motion, pulling 2 nucleotides of DNA out of the RuvA tetramer per ATP hydrolyzed, thus driving DNA branch migration. The RuvB motors rotate together with the DNA substrate, which together with the progressing nucleotide cycle form the mechanistic basis for DNA recombination by continuous HJ branch migration. Branch migration allows RuvC to scan DNA until it finds its consensus sequence, where it cleaves and resolves cruciform DNA. In Orientia tsutsugamushi (strain Ikeda) (Rickettsia tsutsugamushi), this protein is Holliday junction branch migration complex subunit RuvB.